A 666-amino-acid chain; its full sequence is ATP-dependent zinc metalloprotease FtsH (666 aa).

Residues 1–23 (MSREVTSGLPQDKPTGSAPPPPP) are disordered. The Cytoplasmic portion of the chain corresponds to 1–27 (MSREVTSGLPQDKPTGSAPPPPPPWRR). The helical transmembrane segment at 28 to 48 (WLLPIGLLVSLVLLFTFPMRP) threads the bilayer. At 49–125 (SSGKTLTYSE…RPPGPSLASQ (77 aa)) the chain is on the extracellular side. A helical transmembrane segment spans residues 126–146 (VLAGVLSFLPFLLLLGLFAYS). At 147–666 (GRRAGAGFLA…RTAASSDDLL (520 aa)) the chain is on the cytoplasmic side. 219-226 (GPPGTGKT) is a binding site for ATP. Zn(2+) is bound at residue H442. The active site involves E443. Residues H446 and D518 each coordinate Zn(2+). The interval 626 to 666 (PEEHREAAARHVRRPGIAAATGASMAGGSEPRTAASSDDLL) is disordered. A compositionally biased stretch (low complexity) spans 641-653 (GIAAATGASMAGG).

The protein in the central section; belongs to the AAA ATPase family. It in the C-terminal section; belongs to the peptidase M41 family. As to quaternary structure, homohexamer. Zn(2+) is required as a cofactor.

It is found in the cell membrane. Acts as a processive, ATP-dependent zinc metallopeptidase for both cytoplasmic and membrane proteins. Plays a role in the quality control of integral membrane proteins. This Acidothermus cellulolyticus (strain ATCC 43068 / DSM 8971 / 11B) protein is ATP-dependent zinc metalloprotease FtsH.